Reading from the N-terminus, the 284-residue chain is uncharacterized protein (284 aa).

It to E.coli YnjA.

This is an uncharacterized protein from Mycobacterium tuberculosis (strain CDC 1551 / Oshkosh).